The primary structure comprises 119 residues: MLHQMMKAKLHRATISAADLNYEGSLTIDTDLLKASGIRPYERIYVYNVNNGERFETYAIEGEAGSGAIQLNGAAARKGMIGDFLIIVTYALCSDDEVDEHRPNVVLLNPDNTIKEIVK.

The active-site Schiff-base intermediate with substrate; via pyruvic acid is S25. At S25 the chain carries Pyruvic acid (Ser). T57 is a binding site for substrate. Residue Y58 is the Proton donor of the active site. A substrate-binding site is contributed by G73–A75.

It belongs to the PanD family. As to quaternary structure, heterooctamer of four alpha and four beta subunits. Pyruvate is required as a cofactor. Post-translationally, is synthesized initially as an inactive proenzyme, which is activated by self-cleavage at a specific serine bond to produce a beta-subunit with a hydroxyl group at its C-terminus and an alpha-subunit with a pyruvoyl group at its N-terminus.

The protein resides in the cytoplasm. It carries out the reaction L-aspartate + H(+) = beta-alanine + CO2. The protein operates within cofactor biosynthesis; (R)-pantothenate biosynthesis; beta-alanine from L-aspartate: step 1/1. Functionally, catalyzes the pyruvoyl-dependent decarboxylation of aspartate to produce beta-alanine. In Desulfotalea psychrophila (strain LSv54 / DSM 12343), this protein is Aspartate 1-decarboxylase.